Consider the following 455-residue polypeptide: Membrane protein Pbs54 (455 aa).

A helical transmembrane segment spans residues 12–32 (IISIIILILRISLFSCAEHLF). 3 N-linked (GlcNAc...) asparagine glycosylation sites follow: N41, N102, and N125. 6 helical membrane passes run 181–201 (IFLI…LFNG), 220–240 (FIFF…LSCI), 244–264 (ILTF…FYLF), 285–305 (ILIG…IIFI), 312–332 (FLVK…IFFL), and 346–366 (FVFS…FWNI). A glycan (N-linked (GlcNAc...) asparagine) is linked at N373. Residues 398 to 418 (NMFALFMIFAMSILSIIFPRI) traverse the membrane as a helical segment.

The protein resides in the cell projection. It is found in the cilium. It localises to the flagellum. Its subcellular location is the cell membrane. In terms of biological role, plays a role in gamete fertilization. Required for the successful transmission of parasites to mosquito. This is Membrane protein Pbs54 from Plasmodium berghei (strain Anka).